The sequence spans 225 residues: Peptidyl-tRNA hydrolase (225 aa).

Tyrosine 14 provides a ligand contact to tRNA. Histidine 19 (proton acceptor) is an active-site residue. Positions 64, 66, and 112 each coordinate tRNA. Residues 182-225 (AVALRMQPPKPEKPKPAAKAPEAQAPEAAPDERSALQKLADRFR) form a disordered region. Low complexity predominate over residues 198–209 (AAKAPEAQAPEA). Basic and acidic residues predominate over residues 211 to 225 (PDERSALQKLADRFR).

This sequence belongs to the PTH family. In terms of assembly, monomer.

The protein resides in the cytoplasm. The enzyme catalyses an N-acyl-L-alpha-aminoacyl-tRNA + H2O = an N-acyl-L-amino acid + a tRNA + H(+). Its function is as follows. Hydrolyzes ribosome-free peptidyl-tRNAs (with 1 or more amino acids incorporated), which drop off the ribosome during protein synthesis, or as a result of ribosome stalling. Catalyzes the release of premature peptidyl moieties from peptidyl-tRNA molecules trapped in stalled 50S ribosomal subunits, and thus maintains levels of free tRNAs and 50S ribosomes. The sequence is that of Peptidyl-tRNA hydrolase from Cereibacter sphaeroides (strain ATCC 17029 / ATH 2.4.9) (Rhodobacter sphaeroides).